Here is a 1125-residue protein sequence, read N- to C-terminus: tRNA (34-2'-O)-methyltransferase regulator WDR6 (1125 aa).

The residue at position 1 (M1) is an N-acetylmethionine. WD repeat units follow at residues 53–97, 105–143, 147–189, 200–238, 247–285, 289–327, 335–376, 381–422, 425–470, 476–520, 559–598, 604–642, 645–684, 739–785, 848–897, 905–950, 974–1016, 1040–1077, and 1083–1125; these read VKRV…VVKV, RELW…LYDP, CMLQ…IWYP, APDR…LWKV, RVQN…VWSH, ILQA…LWHL, LGVS…LYDL, WEQL…VVPI, PTAA…ISAA, IFVK…LFPV, PVST…FVHG, VLRQ…VWSP, HEKL…LYRA, LIDI…VWAV, RNKH…LFLL, HLLA…FWDL, GTPS…VFTL, EEYS…FWRL, and TFMN…NWYD.

It belongs to the WD repeat WDR6 family. In terms of assembly, interacts with FTSJ1; the interaction is direct, and required for 2'-O-methylation of position 34 in substrate tRNAs. Interacts with IRS4. Interacts with STK11/LKB1.

It localises to the cytoplasm. Functionally, together with methyltransferase FTSJ1, methylates the 2'-O-ribose of nucleotides at position 34 of the tRNA anticodon loop of substrate tRNAs. Required for the correct positioning of the substrate tRNA for methylation. Required to suppress amino acid starvation-induced autophagy. Enhances the STK11/LKB1-induced cell growth suppression activity. This is tRNA (34-2'-O)-methyltransferase regulator WDR6 (Wdr6) from Mus musculus (Mouse).